The chain runs to 985 residues: Thioredoxin domain-containing protein 11 (985 aa).

A compositionally biased stretch (gly residues) spans 1–11; sequence MSECGGRGGGS. Positions 1 to 38 are disordered; sequence MSECGGRGGGSSSSEDAEDEGGGGGGPAGSDCLSSSPT. The span at 29–38 shows a compositional bias: low complexity; that stretch reads GSDCLSSSPT. Residues 65–85 form a helical membrane-spanning segment; that stretch reads LLCGAVALGCALLLALKFTCS. Residues 92–214 enclose the Thioredoxin 1 domain; the sequence is IPAKPPVSFF…IEKFVRRVMK (123 aa). 2 disulfide bridges follow: Cys-469–Cys-472 and Cys-719–Cys-722. One can recognise a Thioredoxin 2 domain in the interval 649 to 799; sequence LDPKQALMKL…LLRFILHHSD (151 aa). Residues 821-919 are a coiled coil; sequence VLQRGHISHL…ASENLLTENT (99 aa). Ser-828 carries the phosphoserine modification. A disordered region spans residues 935 to 985; the sequence is RDGAESLAAQREVHPKQPEPSATPQLPGSSPPPANVSATLVSERNKENRTD.

Belongs to the protein disulfide isomerase family. Interacts with the cytoplasmic part of DUOX1 and DUOX2. Interacts with TPO and CYBA. Widely expressed at low level. Expressed at higher level in thyroid and prostate.

It localises to the endoplasmic reticulum membrane. In terms of biological role, may act as a redox regulator involved in DUOX proteins folding. The interaction with DUOX1 and DUOX2 suggest that it belongs to a multiprotein complex constituting the thyroid H(2)O(2) generating system. It is however not sufficient to assist DUOX1 and DUOX2 in H(2)O(2) generation. This Homo sapiens (Human) protein is Thioredoxin domain-containing protein 11 (TXNDC11).